The chain runs to 667 residues: MNKEQVSKKIESLIELLNQYGYEYYVLDNPTVPDAEYDQKLRELQQLEQDFPDLVMENSPTQRVGGAPLASFQKVTHNVPMLSLGNAFNEQDLRDFARRASNGTDQPISFVCELKIDGLAISLTYENGKFVRGATRGDGTIGEDITSNLKTIRSIPLSIKEQGTLEVRGEAYMPHKSFLALNELREKNEEEPFANPRNAAAGSLRQLDPKIAAKRNLDIFLYGVGEWENSDLTSHSEHLTRLKELGFKTNKEWKKCNTIDEVIEYVNYWTEHRNDLSYEIDGIVIKVDSLDQQEELGFTAKSPRWAIAYKFPAEEAMTTLRDIELSIGRTGVVTPTAILDPVRVAGTTVQRASLHNEDLIREQDIRIGDKVVIKKAGDIIPKVVRSVVEQRNGDEQEFHMPDECPACGNELVRLEEEVALRCINPNCPAQLMEGLIHFVSRNAMNIDGLGEKVIIQLFQENLVQTMADLYRLDKEELLQLERMGEKSVTNLLEAIEKSKENSLERLLFGLGIRFIGSKAAKTLAMEFETMENLQKATYEDVLAIDEIGDKMADSIVQYFAEEKVTELLSNLRELGVQMEYKGPRKSEQATDSVLSGKTVVLTGKMEKFSRKEAKEIIESLGGTVTGSVSKKTDIVIAGEDAGSKLDKAEKLGIDVWSEQQLEDVVGK.

NAD(+) contacts are provided by residues 34-38 (DAEYD), 83-84 (SL), and Glu113. Lys115 acts as the N6-AMP-lysine intermediate in catalysis. Residues Arg136, Glu170, Lys286, and Lys310 each coordinate NAD(+). Zn(2+)-binding residues include Cys404, Cys407, Cys422, and Cys427. The 79-residue stretch at 589–667 (ATDSVLSGKT…EQQLEDVVGK (79 aa)) folds into the BRCT domain.

It belongs to the NAD-dependent DNA ligase family. LigA subfamily. The cofactor is Mg(2+). Mn(2+) is required as a cofactor.

It carries out the reaction NAD(+) + (deoxyribonucleotide)n-3'-hydroxyl + 5'-phospho-(deoxyribonucleotide)m = (deoxyribonucleotide)n+m + AMP + beta-nicotinamide D-nucleotide.. In terms of biological role, DNA ligase that catalyzes the formation of phosphodiester linkages between 5'-phosphoryl and 3'-hydroxyl groups in double-stranded DNA using NAD as a coenzyme and as the energy source for the reaction. It is essential for DNA replication and repair of damaged DNA. The chain is DNA ligase from Oceanobacillus iheyensis (strain DSM 14371 / CIP 107618 / JCM 11309 / KCTC 3954 / HTE831).